The following is a 101-amino-acid chain: Protein S100-A4 (101 aa).

At Ala2 the chain carries N-acetylalanine. The residue at position 7 (Lys7) is an N6-acetyllysine. EF-hand domains lie at 12 to 47 (MVST…SFLG) and 50 to 85 (TDEA…IAMM). Residues Lys28 and Glu33 each contribute to the Ca(2+) site. Lys35 bears the N6-acetyllysine mark. 5 residues coordinate Ca(2+): Asp63, Asn65, Asp67, Glu69, and Glu74.

It belongs to the S-100 family. As to quaternary structure, homodimer. Interacts with PPFIBP1 in a calcium-dependent mode. Interacts with PGLYRP1; this complex acts as a chemoattractant that promotes lymphocyte movement. Interacts with MYH9; this interaction increases cell motility. Interacts with Annexin 2/ANXA2. Interacts with TP53; this interaction promotes TP53 degradation. Interacts with CCR5. Interacts with FCGR3A; this interaction inhibits PKC-dependent phosphorylation of FCGR3A. As to expression, ubiquitously expressed.

It is found in the secreted. The protein localises to the nucleus. Its subcellular location is the cytoplasm. In terms of biological role, calcium-binding protein that plays a role in various cellular processes including motility, angiogenesis, cell differentiation, apoptosis, and autophagy. Increases cell motility and invasiveness by interacting with non-muscle myosin heavy chain (NMMHC) IIA/MYH9. Mechanistically, promotes filament depolymerization and increases the amount of soluble myosin-IIA, resulting in the formation of stable protrusions facilitating chemotaxis. Also modulates the pro-apoptotic function of TP53 by binding to its C-terminal transactivation domain within the nucleus and reducing its protein levels. Within the extracellular space, stimulates cytokine production including granulocyte colony-stimulating factor and CCL24 from T-lymphocytes. In addition, stimulates T-lymphocyte chemotaxis by acting as a chemoattractant complex with PGLYRP1 that promotes lymphocyte migration via CCR5 and CXCR3 receptors. The sequence is that of Protein S100-A4 (S100A4) from Homo sapiens (Human).